The chain runs to 255 residues: Aspartate/glutamate leucyltransferase (255 aa).

It belongs to the R-transferase family. Bpt subfamily.

The protein localises to the cytoplasm. It carries out the reaction N-terminal L-glutamyl-[protein] + L-leucyl-tRNA(Leu) = N-terminal L-leucyl-L-glutamyl-[protein] + tRNA(Leu) + H(+). It catalyses the reaction N-terminal L-aspartyl-[protein] + L-leucyl-tRNA(Leu) = N-terminal L-leucyl-L-aspartyl-[protein] + tRNA(Leu) + H(+). Functions in the N-end rule pathway of protein degradation where it conjugates Leu from its aminoacyl-tRNA to the N-termini of proteins containing an N-terminal aspartate or glutamate. This Leptospira borgpetersenii serovar Hardjo-bovis (strain JB197) protein is Aspartate/glutamate leucyltransferase.